The primary structure comprises 131 residues: Phosphoribosyl-AMP cyclohydrolase (131 aa).

D74 serves as a coordination point for Mg(2+). A Zn(2+)-binding site is contributed by C75. Mg(2+)-binding residues include D76 and D78. Positions 91 and 98 each coordinate Zn(2+).

The protein belongs to the PRA-CH family. As to quaternary structure, homodimer. The cofactor is Mg(2+). Requires Zn(2+) as cofactor.

The protein resides in the cytoplasm. The enzyme catalyses 1-(5-phospho-beta-D-ribosyl)-5'-AMP + H2O = 1-(5-phospho-beta-D-ribosyl)-5-[(5-phospho-beta-D-ribosylamino)methylideneamino]imidazole-4-carboxamide. The protein operates within amino-acid biosynthesis; L-histidine biosynthesis; L-histidine from 5-phospho-alpha-D-ribose 1-diphosphate: step 3/9. Functionally, catalyzes the hydrolysis of the adenine ring of phosphoribosyl-AMP. This Bradyrhizobium sp. (strain BTAi1 / ATCC BAA-1182) protein is Phosphoribosyl-AMP cyclohydrolase.